The sequence spans 459 residues: Cobyrinate a,c-diamide synthase (459 aa).

Positions 249–446 (RIGMAFDEAF…VHTHFASRPG (198 aa)) constitute a GATase cobBQ-type domain. Cysteine 332 (nucleophile) is an active-site residue.

Belongs to the CobB/CbiA family. It depends on Mg(2+) as a cofactor.

It carries out the reaction cob(II)yrinate + 2 L-glutamine + 2 ATP + 2 H2O = cob(II)yrinate a,c diamide + 2 L-glutamate + 2 ADP + 2 phosphate + 2 H(+). It functions in the pathway cofactor biosynthesis; adenosylcobalamin biosynthesis; cob(II)yrinate a,c-diamide from sirohydrochlorin (anaerobic route): step 10/10. Catalyzes the ATP-dependent amidation of the two carboxylate groups at positions a and c of cobyrinate, using either L-glutamine or ammonia as the nitrogen source. The chain is Cobyrinate a,c-diamide synthase from Syntrophotalea carbinolica (strain DSM 2380 / NBRC 103641 / GraBd1) (Pelobacter carbinolicus).